We begin with the raw amino-acid sequence, 651 residues long: Peptide-N(4)-(N-acetyl-beta-glucosaminyl)asparagine amidase (651 aa).

Alanine 2 is modified (N-acetylalanine). The 62-residue stretch at 30–91 (EASKLLLTYA…EGETHLIFPK (62 aa)) folds into the PUB domain. 4 residues coordinate Zn(2+): cysteine 247, cysteine 250, cysteine 280, and cysteine 283. Cysteine 306 serves as the catalytic Nucleophile. Catalysis depends on residues histidine 333 and aspartate 350. Residues 451–651 (ELGGRVSGSL…LEIIITFNDL (201 aa)) form the PAW domain.

The protein belongs to the transglutaminase-like superfamily. PNGase family. In terms of assembly, component of a complex required to couple retrotranslocation, ubiquitination and deglycosylation composed of NGLY1, SAKS1, AMFR, VCP and RAD23B. Interacts with the proteasome components RAD23B and PSMC1. Interacts with directly with VCP. Interacts with DERL1, bringing it close to the endoplasmic reticulum membrane. Interacts with SAKS1. It depends on Zn(2+) as a cofactor. In terms of tissue distribution, ubiquitously expressed with highest level in testis.

It localises to the cytoplasm. The enzyme catalyses Hydrolysis of an N(4)-(acetyl-beta-D-glucosaminyl)asparagine residue in which the glucosamine residue may be further glycosylated, to yield a (substituted) N-acetyl-beta-D-glucosaminylamine and a peptide containing an aspartate residue.. With respect to regulation, inhibited by Z-VAD-fmk, a well-known caspase inhibitor, which inhibits enzyme activity through covalent binding of the carbohydrate to the single Cys-306 residue. In terms of biological role, specifically deglycosylates the denatured form of N-linked glycoproteins in the cytoplasm and assists their proteasome-mediated degradation. Cleaves the beta-aspartyl-glucosamine (GlcNAc) of the glycan and the amide side chain of Asn, converting Asn to Asp. Prefers proteins containing high-mannose over those bearing complex type oligosaccharides. Can recognize misfolded proteins in the endoplasmic reticulum that are exported to the cytosol to be destroyed and deglycosylate them, while it has no activity toward native proteins. Deglycosylation is a prerequisite for subsequent proteasome-mediated degradation of some, but not all, misfolded glycoproteins. The chain is Peptide-N(4)-(N-acetyl-beta-glucosaminyl)asparagine amidase (Ngly1) from Mus musculus (Mouse).